The primary structure comprises 249 residues: RNA polymerase sigma factor SigI3 (249 aa).

A Polymerase core binding motif is present at residues 60 to 73; the sequence is EEFSIGLAAFNEAI. Residues 199–218 constitute a DNA-binding region (H-T-H motif); that stretch reads MKEVLSRIKVNHKTIQRNRK.

The protein belongs to the sigma-70 factor family. SigI subfamily. Interacts with RsgI3.

The protein localises to the cytoplasm. With respect to regulation, negatively regulated by the anti-sigma-I factor RsgI3. Binding of the polysaccharide substrate to RsgI3 may lead to the release and activation of SigI3. In terms of biological role, sigma factors are initiation factors that promote the attachment of RNA polymerase to specific initiation sites and are then released. This sigma factor is involved in regulation of cellulosomal genes via an external polysaccharide-sensing mechanism. Recognizes the predicted promoters associated with sigI3 itself, pl11, ce12 and cipA. The chain is RNA polymerase sigma factor SigI3 from Acetivibrio thermocellus (strain ATCC 27405 / DSM 1237 / JCM 9322 / NBRC 103400 / NCIMB 10682 / NRRL B-4536 / VPI 7372) (Clostridium thermocellum).